We begin with the raw amino-acid sequence, 1325 residues long: Cyclic nucleotide-gated channel beta-1 (1325 aa).

Disordered regions lie at residues 1-124 (MLGW…QVAV), 147-198 (PQPV…SLWL), 227-279 (AVLD…PGDP), 340-470 (WEDA…LDSC), 482-637 (LERT…SQNS), and 659-694 (KEKL…PAEA). The Cytoplasmic segment spans residues 1–732 (MLGWVQRVLP…SIDPLTNLMY (732 aa)). Over residues 43 to 81 (PQQEPEPEPEPEPEPEPEPEPEPEPEPEPEPEPVPEEAP) the composition is skewed to acidic residues. Over residues 105-121 (LQETQVADPAQPTSQAQ) the composition is skewed to polar residues. Residues 370–379 (IPRELTKIQE) are compositionally biased toward basic and acidic residues. Acidic residues-rich tracts occupy residues 380–393 (ERED…EEKE), 418–463 (EEKE…EEEP), and 495–517 (LPEE…EEKK). The segment covering 518-527 (EEEVEKKEEG) has biased composition (basic and acidic residues). Residues 560-571 (TLPPPERPPPSP) show a composition bias toward pro residues. The interval 633–643 (ASQNSAIINDR) is calmodulin-binding CaM1. A helical membrane pass occupies residues 733 to 754 (ILWLFFVVLAWNWNCWLIPVRW). Over 755–763 (AFPYQRADN) the chain is Extracellular. A helical membrane pass occupies residues 764–785 (IHFWLLMDYLCDFIYLLDITVF). Residues 786-800 (QMRLQFVKGGDIITD) lie on the Cytoplasmic side of the membrane. A helical membrane pass occupies residues 801–820 (KKEMRNNYLKSRRFKMDLLC). Residues 821-836 (LLPLDFLYLKLGINPL) lie on the Extracellular side of the membrane. Residues 837-849 (LRLPRCLKYMAFF) form a helical membrane-spanning segment. Over 850–861 (EFNNRLEAILSK) the chain is Cytoplasmic. The helical transmembrane segment at 862 to 884 (AYVYRVIRTTAYLLYSLHLNSCL) threads the bilayer. Positions 862–961 (AYVYRVIRTT…IGQMRDVVGA (100 aa)) are ion conduction pathway. At 885–907 (YYWASAFQGIGSTHWVYDGVGNS) the chain is on the extracellular side. The next 2 helical transmembrane spans lie at 908–934 (YIRC…LFEI) and 935–960 (VFQL…DVVG). The Cytoplasmic segment spans residues 961-1325 (AATAGQTYYR…VLEEKKEGAE (365 aa)). The C-linker stretch occupies residues 964 to 1040 (AGQTYYRSCM…SIVSKVALFQ (77 aa)). The tract at residues 1038–1142 (LFQGCDRQMI…LDKKDLNEIL (105 aa)) is cNMP-binding domain. The interval 1044–1160 (RQMIFDMLKR…LLRKKARRML (117 aa)) is cyclic nucleotide-binding domain. 5 residues coordinate 3',5'-cyclic GMP: Gly-1105, Glu-1106, Ser-1108, Arg-1118, and Thr-1119. Residue Arg-1118 coordinates 3',5'-cyclic AMP. A calmodulin-binding CaM2 region spans residues 1224-1230 (QQQLLEQ). Residues 1226–1250 (QLLEQAKSSQEAGGEEGSGATDQPA) are compositionally biased toward low complexity. Residues 1226–1325 (QLLEQAKSSQ…VLEEKKEGAE (100 aa)) are disordered. Positions 1262–1279 (KPPGPPEPSAQSSPPPAS) are enriched in pro residues.

This sequence belongs to the cyclic nucleotide-gated cation channel (TC 1.A.1.5) family. CNGB1 subfamily. As to expression, rod outer segments. Olfactory sensory neurons.

The protein resides in the cell projection. Its subcellular location is the cilium membrane. It catalyses the reaction Ca(2+)(in) = Ca(2+)(out). The enzyme catalyses Na(+)(in) = Na(+)(out). The catalysed reaction is K(+)(in) = K(+)(out). It carries out the reaction NH4(+)(in) = NH4(+)(out). It catalyses the reaction Rb(+)(in) = Rb(+)(out). The enzyme catalyses Li(+)(in) = Li(+)(out). The catalysed reaction is Cs(+)(in) = Cs(+)(out). In terms of biological role, pore-forming subunit of the rod cyclic nucleotide-gated channel. Mediates rod photoresponses at dim light converting transient changes in intracellular cGMP levels into electrical signals. In the dark, cGMP levels are high and keep the channel open enabling a steady inward current carried by Na(+) and Ca(2+) ions that leads to membrane depolarization and neurotransmitter release from synaptic terminals. Upon photon absorption cGMP levels decline leading to channel closure and membrane hyperpolarization that ultimately slows neurotransmitter release and signals the presence of light, the end point of the phototransduction cascade. Pore-forming subunit of the olfactory cyclic nucleotide-gated channel. Operates in the cilia of olfactory sensory neurons where chemical stimulation of the odorant is converted to an electrical signal. Mediates odorant-induced cAMP-dependent Ca(2+) influx triggering neuron depolarization. The rise of intracellular Ca(2+) levels potentiates the olfactory response by activating Ca(2+)-dependent Cl(-) channels, but it also serves as a negative feedback signal to desensitize the channel for rapid adaptation to odorants. Conducts cGMP- and cAMP-gated ion currents, with permeability for monovalent and divalent cations. The selectivity for Ca(2+) over Na(+) increases with cGMP concentrations, whereas the selectivity among monovalent ions is independent of the cGMP levels. The chain is Cyclic nucleotide-gated channel beta-1 from Mus musculus (Mouse).